The following is a 622-amino-acid chain: Basic helix-loop-helix ARNT-like protein 2 (622 aa).

Low complexity predominate over residues 1 to 10 (MAEAGVGSAE). Disordered regions lie at residues 1-29 (MAEAGVGSAEGAEEERRAVEENFPVDGNS) and 41-86 (PITK…EDEE). The segment covering 45–54 (PATTSFNNSV) has biased composition (polar residues). Residues 67–76 (DNQDTVEVDG) show a composition bias toward acidic residues. A compositionally biased stretch (basic and acidic residues) spans 77–86 (DPQKRNEDEE). Residues 92 to 145 (DFREAHSQTEKRRRDKMNNLIEELSAMIPQCNPMARKLDKLTVLRMAVQHLKSL) enclose the bHLH domain. 2 PAS domains span residues 163-235 (KDDE…DVSP) and 342-412 (VPQK…LQNK). One can recognise a PAC domain in the interval 417–460 (TNSYKFRAKDGSFITLKSQWFSFMNPWTKELEYIVSNNTVVLGH).

Component of the circadian core oscillator, which includes the CRY proteins, CLOCK, or NPAS2, BMAL1 or BMAL2, CSNK1D and/or CSNK1E, TIMELESS and the PER proteins. Interacts directly with CLOCK to form the BMAL2-CLOCK transactivator. Can form heterodimers or homodimers which interact directly with CLOCK to form the transcription activator. In terms of tissue distribution, expressed in the pineal gland.

The protein resides in the nucleus. Its function is as follows. Transcriptional activator which forms a core component of the circadian clock. The circadian clock, an internal time-keeping system, regulates various physiological processes through the generation of approximately 24 hour circadian rhythms in gene expression, which are translated into rhythms in metabolism and behavior. It is derived from the Latin roots 'circa' (about) and 'diem' (day) and acts as an important regulator of a wide array of physiological functions including metabolism, sleep, body temperature, blood pressure, endocrine, immune, cardiovascular, and renal function. Consists of two major components: the central clock, residing in the suprachiasmatic nucleus (SCN) of the brain, and the peripheral clocks that are present in nearly every tissue and organ system. Both the central and peripheral clocks can be reset by environmental cues, also known as Zeitgebers (German for 'timegivers'). The predominant Zeitgeber for the central clock is light, which is sensed by retina and signals directly to the SCN. The central clock entrains the peripheral clocks through neuronal and hormonal signals, body temperature and feeding-related cues, aligning all clocks with the external light/dark cycle. Circadian rhythms allow an organism to achieve temporal homeostasis with its environment at the molecular level by regulating gene expression to create a peak of protein expression once every 24 hours to control when a particular physiological process is most active with respect to the solar day. Transcription and translation of core clock components (CLOCK, NPAS2, BMAL1, BMAL2, PER1, PER2, PER3, CRY1 and CRY2) plays a critical role in rhythm generation, whereas delays imposed by post-translational modifications (PTMs) are important for determining the period (tau) of the rhythms (tau refers to the period of a rhythm and is the length, in time, of one complete cycle). A diurnal rhythm is synchronized with the day/night cycle, while the ultradian and infradian rhythms have a period shorter and longer than 24 hours, respectively. Disruptions in the circadian rhythms contribute to the pathology of cardiovascular diseases, cancer, metabolic syndromes and aging. A transcription/translation feedback loop (TTFL) forms the core of the molecular circadian clock mechanism. Transcription factors, CLOCK or NPAS2 and BMAL1 or BMAL2, form the positive limb of the feedback loop, act in the form of a heterodimer and activate the transcription of core clock genes and clock-controlled genes (involved in key metabolic processes), harboring E-box elements (5'-CACGTG-3') within their promoters. The core clock genes: PER1/2/3 and CRY1/2 which are transcriptional repressors form the negative limb of the feedback loop and interact with the CLOCK|NPAS2-BMAL1|BMAL2 heterodimer inhibiting its activity and thereby negatively regulating their own expression. This heterodimer also activates nuclear receptors NR1D1/2 and RORA/B/G, which form a second feedback loop and which activate and repress BMAL1 transcription, respectively. The preferred binding motif for the CLOCK-BMAL1 heterodimer is 5'-CACGTGA-3', which contains a flanking adenine nucleotide at the 3-prime end of the canonical 6-nucleotide E-box sequence. CLOCK specifically binds to the half-site 5'-CAC-3', while BMAL1 binds to the half-site 5'-GTGA-3'. The sequence is that of Basic helix-loop-helix ARNT-like protein 2 (BMAL2) from Gallus gallus (Chicken).